The primary structure comprises 336 residues: Adenosine deaminase (336 aa).

Zn(2+) is bound by residues His-15 and His-17. Residues His-17, Asp-19, and Gly-172 each contribute to the substrate site. His-199 is a binding site for Zn(2+). The active-site Proton donor is Glu-202. Asp-279 contributes to the Zn(2+) binding site.

Belongs to the metallo-dependent hydrolases superfamily. Adenosine and AMP deaminases family. Adenosine deaminase subfamily. Zn(2+) serves as cofactor.

It carries out the reaction adenosine + H2O + H(+) = inosine + NH4(+). It catalyses the reaction 2'-deoxyadenosine + H2O + H(+) = 2'-deoxyinosine + NH4(+). Its function is as follows. Catalyzes the hydrolytic deamination of adenosine and 2-deoxyadenosine. In Streptococcus thermophilus (strain ATCC BAA-250 / LMG 18311), this protein is Adenosine deaminase.